A 236-amino-acid chain; its full sequence is MGHRITTQSRGHGGPTYRAPSHRYKAALKHLGRAGETVSYKIIDIEHDPARHTPIALVDVPDGENTYVLVTEGMGIGDVLTWGADAEIRNGNTLPLQEIPTGSSVCNIEAYPNDGGKFVRASGVQATVTDKMEGRVAVRMPSGSTKWFNGQCRATIGIVAGGGRSEKPFVKAGKKYHKMKNTASNWPRVRGFAMNVIDHPFGGGGHQHAGRPKTVSRGTSPGRKVGHIAARRTGRR.

The span at 1-10 shows a compositional bias: polar residues; it reads MGHRITTQSR. Disordered stretches follow at residues 1 to 20 and 202 to 236; these read MGHR…YRAP and GGGG…TGRR. Over residues 224–236 the composition is skewed to basic residues; sequence KVGHIAARRTGRR.

Belongs to the universal ribosomal protein uL2 family. Part of the 50S ribosomal subunit. Forms a bridge to the 30S subunit in the 70S ribosome.

In terms of biological role, one of the primary rRNA binding proteins. Required for association of the 30S and 50S subunits to form the 70S ribosome, for tRNA binding and peptide bond formation. It has been suggested to have peptidyltransferase activity; this is somewhat controversial. Makes several contacts with the 16S rRNA in the 70S ribosome. This chain is Large ribosomal subunit protein uL2, found in Methanospirillum hungatei JF-1 (strain ATCC 27890 / DSM 864 / NBRC 100397 / JF-1).